The following is a 398-amino-acid chain: Subtilisin-like protease CPC735_050320 (398 aa).

The first 19 residues, 1-19 (MVFLGKILPLALAALSVNG), serve as a signal peptide directing secretion. Positions 20–117 (AEILSAPGAE…IERDQIMKAS (98 aa)) are excised as a propeptide. Residues 35 to 115 (YIVVMKEGTS…AYIERDQIMK (81 aa)) enclose the Inhibitor I9 domain. The Peptidase S8 domain occupies 127-398 (SWGLARVSSR…NRLINNGVSQ (272 aa)). Catalysis depends on charge relay system residues aspartate 159 and histidine 190. Residues asparagine 220 and asparagine 250 are each glycosylated (N-linked (GlcNAc...) asparagine). Serine 344 (charge relay system) is an active-site residue.

The protein belongs to the peptidase S8 family.

Its subcellular location is the secreted. Secreted subtilisin-like serine protease with keratinolytic activity that contributes to pathogenicity. This Coccidioides posadasii (strain C735) (Valley fever fungus) protein is Subtilisin-like protease CPC735_050320.